The following is a 193-amino-acid chain: MLEYLLLLISTVLVNNFVLVKFLGLCPFMGVSKKIEPAVGMGLATTFVLTLTSAFAYLVQHYLLVPLAAESLSTLAFILVIAVVVQFTEMVIHKSAPDLYRILGIYLPLITTNCIVLGLALLNITMQHNFMQSVVYGFGGGLGFMLVLILFASLRERLAAADVPAPFQGIAIGMVTAGLMSLAFLGFTGLIKL.

Helical transmembrane passes span 5 to 25, 39 to 59, 72 to 92, 102 to 122, 134 to 154, and 170 to 190; these read LLLL…FLGL, VGMG…AYLV, LSTL…EMVI, ILGI…LALL, VVYG…FASL, and IAIG…FTGL.

Belongs to the NqrDE/RnfAE family. In terms of assembly, the complex is composed of six subunits: RnfA, RnfB, RnfC, RnfD, RnfE and RnfG.

It localises to the cell inner membrane. Part of a membrane-bound complex that couples electron transfer with translocation of ions across the membrane. This chain is Ion-translocating oxidoreductase complex subunit A, found in Tolumonas auensis (strain DSM 9187 / NBRC 110442 / TA 4).